Consider the following 229-residue polypeptide: Cytidylate kinase (229 aa).

ATP is bound at residue 12 to 20 (GPSGSGKGT).

Belongs to the cytidylate kinase family. Type 1 subfamily.

The protein resides in the cytoplasm. The catalysed reaction is CMP + ATP = CDP + ADP. The enzyme catalyses dCMP + ATP = dCDP + ADP. The polypeptide is Cytidylate kinase (Pseudomonas syringae pv. tomato (strain ATCC BAA-871 / DC3000)).